Here is a 72-residue protein sequence, read N- to C-terminus: Large ribosomal subunit protein bL31 (72 aa).

4 residues coordinate Zn(2+): Cys-17, Cys-19, Cys-37, and Cys-40.

This sequence belongs to the bacterial ribosomal protein bL31 family. Type A subfamily. In terms of assembly, part of the 50S ribosomal subunit. Zn(2+) is required as a cofactor.

Its function is as follows. Binds the 23S rRNA. This Clostridium botulinum (strain ATCC 19397 / Type A) protein is Large ribosomal subunit protein bL31.